Here is a 273-residue protein sequence, read N- to C-terminus: MLLIDVGNSHVVFGIQGENGGRVCVRELFRLAPDARKTQDEYSLLIHALCERAGVGRASLRDAFISSVVPVLTKTIADAVAQISGVQPVVFGPWAYEHLPVRIPEPVRAEIGTDLVANAVAAYVHFRSACVVVDCGTALTFTAVDGTGLIQGVAIAPGLRTAVQSLHTGTAQLPLVPLALPDSVLGKDTTHAVQAGVVRGTLFVIRAMIAQCQKELGCRCAAVITGGLSRLFSSEVDFPPIDAQLTLSGLAHIARLVPTSLLPPATVSGSSGN.

Position 5–12 (5–12 (DVGNSHVV)) interacts with ATP. Substrate is bound at residue 112–115 (GTDL). The Proton acceptor role is filled by Asp114. Asp134 provides a ligand contact to K(+). Residue Thr137 coordinates ATP. A substrate-binding site is contributed by Thr189.

The protein belongs to the type III pantothenate kinase family. In terms of assembly, homodimer. NH4(+) serves as cofactor. Requires K(+) as cofactor.

It is found in the cytoplasm. It carries out the reaction (R)-pantothenate + ATP = (R)-4'-phosphopantothenate + ADP + H(+). It participates in cofactor biosynthesis; coenzyme A biosynthesis; CoA from (R)-pantothenate: step 1/5. Catalyzes the phosphorylation of pantothenate (Pan), the first step in CoA biosynthesis. This is Type III pantothenate kinase from Treponema pallidum (strain Nichols).